The following is a 612-amino-acid chain: uncharacterized protein (612 aa).

In terms of domain architecture, J spans 8–75 (ELYLALGLPK…SKKEIYDNFG (68 aa)). A helical membrane pass occupies residues 445 to 465 (AVFWGLVFPITSILGVEQFFL).

The protein belongs to the DnaJ family.

Its subcellular location is the membrane. This is an uncharacterized protein from Schizosaccharomyces pombe (strain 972 / ATCC 24843) (Fission yeast).